Consider the following 57-residue polypeptide: uncharacterized protein (57 aa).

The segment at 34 to 57 is disordered; that stretch reads QGKRGETEGQIEISRKAGHPAPAF.

This is an uncharacterized protein from Saccharomyces cerevisiae (strain ATCC 204508 / S288c) (Baker's yeast).